Reading from the N-terminus, the 25-residue chain is Superoxide dismutase [Mn], mitochondrial (25 aa).

His9 is a binding site for Mn(2+).

This sequence belongs to the iron/manganese superoxide dismutase family. Homotetramer. Requires Mn(2+) as cofactor.

It localises to the mitochondrion matrix. The catalysed reaction is 2 superoxide + 2 H(+) = H2O2 + O2. Destroys superoxide anion radicals which are normally produced within the cells and which are toxic to biological systems. This Alternaria alternata (Alternaria rot fungus) protein is Superoxide dismutase [Mn], mitochondrial.